A 411-amino-acid polypeptide reads, in one-letter code: Tyrosine--tRNA ligase (411 aa).

Tyrosine 34 lines the L-tyrosine pocket. The 'HIGH' region signature appears at 39–48 (CTATSLHIGS). L-tyrosine-binding residues include tyrosine 171 and glutamine 175. Residues 231 to 235 (KMGKT) carry the 'KMSKS' region motif. Lysine 234 provides a ligand contact to ATP. Positions 345 to 411 (ITAFELFHEA…GKKRHILVKI (67 aa)) constitute an S4 RNA-binding domain.

This sequence belongs to the class-I aminoacyl-tRNA synthetase family. TyrS type 1 subfamily. Homodimer.

The protein localises to the cytoplasm. The enzyme catalyses tRNA(Tyr) + L-tyrosine + ATP = L-tyrosyl-tRNA(Tyr) + AMP + diphosphate + H(+). Catalyzes the attachment of tyrosine to tRNA(Tyr) in a two-step reaction: tyrosine is first activated by ATP to form Tyr-AMP and then transferred to the acceptor end of tRNA(Tyr). The chain is Tyrosine--tRNA ligase from Rickettsia bellii (strain RML369-C).